The chain runs to 282 residues: 40S small subunit processome assembly factor 1 (282 aa).

Disordered regions lie at residues 27-98 and 121-143; these read YDLG…SEVP and FHSRSEKRKPKSEEDKPAKNKTK. Residues 48 to 59 are compositionally biased toward basic and acidic residues; it reads KRDSETVADRAA. 2 positions are modified to phosphoserine: serine 67 and serine 75. Positions 89-98 are enriched in low complexity; that stretch reads SAPAAPSEVP. Over residues 131–143 the composition is skewed to basic and acidic residues; it reads KSEEDKPAKNKTK. Lysine 173 is modified (N6-acetyllysine). Residues 208–226 are compositionally biased toward basic and acidic residues; sequence EKRTSMEEEKRAAQETDIF. A disordered region spans residues 208 to 254; that stretch reads EKRTSMEEEKRAAQETDIFKRKKRKGRSQEDRRSKKLAPSILSSGRA. Position 268 is a phosphoserine (serine 268).

Part of the small subunit (SSU) processome, composed of more than 70 proteins and the RNA chaperone small nucleolar RNA (snoRNA) U3.

The protein resides in the chromosome. The protein localises to the nucleus. It localises to the nucleolus. Part of the small subunit (SSU) processome, first precursor of the small eukaryotic ribosomal subunit. During the assembly of the SSU processome in the nucleolus, many ribosome biogenesis factors, an RNA chaperone and ribosomal proteins associate with the nascent pre-rRNA and work in concert to generate RNA folding, modifications, rearrangements and cleavage as well as targeted degradation of pre-ribosomal RNA by the RNA exosome. Prevents helicase DHX37 to be recruited before post-A1 state. The chain is 40S small subunit processome assembly factor 1 from Rattus norvegicus (Rat).